Here is a 646-residue protein sequence, read N- to C-terminus: Threonine--tRNA ligase (646 aa).

The 61-residue stretch at 1–61 (MIKITFPDGS…NEDASVVLYK (61 aa)) folds into the TGS domain. The tract at residues 242-541 (DHRKIGKEMQ…LIEHTAGKFP (300 aa)) is catalytic. Zn(2+) contacts are provided by Cys337, His388, and His518.

It belongs to the class-II aminoacyl-tRNA synthetase family. As to quaternary structure, homodimer. Zn(2+) is required as a cofactor.

It localises to the cytoplasm. It catalyses the reaction tRNA(Thr) + L-threonine + ATP = L-threonyl-tRNA(Thr) + AMP + diphosphate + H(+). Functionally, catalyzes the attachment of threonine to tRNA(Thr) in a two-step reaction: L-threonine is first activated by ATP to form Thr-AMP and then transferred to the acceptor end of tRNA(Thr). Also edits incorrectly charged L-seryl-tRNA(Thr). This chain is Threonine--tRNA ligase, found in Bacteroides fragilis (strain YCH46).